The chain runs to 119 residues: Phytosulfokines 2 (119 aa).

The N-terminal stretch at 1–34 (MSTTRGVSSSSAAAALALLLLFALCFFSFHFAAA) is a signal peptide. Residues 35 to 109 (ARAVPRDEHQ…RRLLSDAHLD (75 aa)) constitute a propeptide that is removed on maturation. Residues tyrosine 110 and tyrosine 112 each carry the sulfotyrosine modification. A propeptide spanning residues 115–119 (HKNKP) is cleaved from the precursor.

This sequence belongs to the phytosulfokine family. Sulfation is important for activity and for the binding to a putative membrane receptor. In terms of processing, PSK-alpha is produced by endopeptidase digestion. PSK-beta is produced from PSK-alpha by exopeptidase digestion.

Its subcellular location is the secreted. Its function is as follows. Promotes plant cell differentiation, organogenesis and somatic embryogenesis as well as cell proliferation. The sequence is that of Phytosulfokines 2 (PSK2) from Oryza sativa subsp. japonica (Rice).